The following is a 55-amino-acid chain: Accessory gland-specific peptide 70A (55 aa).

Residues Met1 to Ser19 form the signal peptide. Hydroxyproline occurs at positions 28, 32, 34, and 38. Cys43 and Cys55 are disulfide-bonded.

Main cells of the accessory glands of males (paragonial gland).

The protein localises to the secreted. In terms of biological role, represses female sexual receptivity and stimulates oviposition. This Drosophila sechellia (Fruit fly) protein is Accessory gland-specific peptide 70A (Acp70A).